We begin with the raw amino-acid sequence, 118 residues long: MESVALYSFQATESDELAFNKGDTLKILNMEDDQNWYKAELRGVEGFIPKNYIRVKPHPWYSGRISRQLAEEILMKRNHLGAFLIRESESSPGEFSVSVNNRAQRGPCLGPKSHSRLG.

Residues 1 to 58 (MESVALYSFQATESDELAFNKGDTLKILNMEDDQNWYKAELRGVEGFIPKNYIRVKPH) enclose the SH3 domain. Residues 60-118 (WYSGRISRQLAEEILMKRNHLGAFLIRESESSPGEFSVSVNNRAQRGPCLGPKSHSRLG) enclose the SH2 domain. A disordered region spans residues 89–118 (ESSPGEFSVSVNNRAQRGPCLGPKSHSRLG). Positions 90–103 (SSPGEFSVSVNNRA) are enriched in polar residues.

It belongs to the GRB2/sem-5/DRK family.

The protein is GRB2-related adapter protein-like (GRAPL) of Homo sapiens (Human).